Consider the following 423-residue polypeptide: MGPMCLNRHMGILLKNISTLLTLQGAAAKQGRRIKEEDLSLLQQAAVVIEKNKIVWVGPQKKLPKEFARKKALRDYDMRGRTVLPGFVECHTHLIFAGDRAAEFEMRNQGVSYQEIAAKGGGILSTMKKTRASSLNDLVKAGQRRLDHFVSQGVTTVEIKSGYALNLKDELKMLQAAQKLSGIRTVNTFLGAHALPPEFKSYEDYLTFLADEVLPVVAKKKLARRVDVFIEKGFFPPEASEKYLRRAQELGFEILIHADQMSLSGGSEIAVRLGALSGDHLLQIEDKEIRKLAQSEVTGVLLPTADLYTKTKYPPARAMIDAGVRVALATDFNPGTSPTQNLNLVGLLARLEMKMSLPEVIAAYTVGGAHALNLQNEVGSLEVGKSADILCIDQDWQTLFYSVGEASEKVVFSRGKKVFGTLK.

Histidine 91 and histidine 93 together coordinate Fe(3+). Histidine 91 and histidine 93 together coordinate Zn(2+). 4-imidazolone-5-propanoate contacts are provided by arginine 100, tyrosine 163, and histidine 193. Tyrosine 163 serves as a coordination point for N-formimidoyl-L-glutamate. Histidine 257 lines the Fe(3+) pocket. Position 257 (histidine 257) interacts with Zn(2+). Glutamine 260 provides a ligand contact to 4-imidazolone-5-propanoate. A Fe(3+)-binding site is contributed by aspartate 331. Position 331 (aspartate 331) interacts with Zn(2+). Asparagine 333 and glycine 335 together coordinate N-formimidoyl-L-glutamate. Threonine 336 is a 4-imidazolone-5-propanoate binding site.

Belongs to the metallo-dependent hydrolases superfamily. HutI family. Zn(2+) serves as cofactor. It depends on Fe(3+) as a cofactor.

It localises to the cytoplasm. The catalysed reaction is 4-imidazolone-5-propanoate + H2O = N-formimidoyl-L-glutamate. The protein operates within amino-acid degradation; L-histidine degradation into L-glutamate; N-formimidoyl-L-glutamate from L-histidine: step 3/3. Catalyzes the hydrolytic cleavage of the carbon-nitrogen bond in imidazolone-5-propanoate to yield N-formimidoyl-L-glutamate. It is the third step in the universal histidine degradation pathway. This Bdellovibrio bacteriovorus (strain ATCC 15356 / DSM 50701 / NCIMB 9529 / HD100) protein is Imidazolonepropionase.